We begin with the raw amino-acid sequence, 77 residues long: Large ribosomal subunit protein eL20 (77 aa).

Belongs to the eukaryotic ribosomal protein eL20 family. As to quaternary structure, part of the 50S ribosomal subunit. Binds 23S rRNA.

The chain is Large ribosomal subunit protein eL20 from Thermococcus kodakarensis (strain ATCC BAA-918 / JCM 12380 / KOD1) (Pyrococcus kodakaraensis (strain KOD1)).